Here is a 90-residue protein sequence, read N- to C-terminus: MARRIICAKLGIEADGLDAPPFPGPQGQRIFEHVSKEAWQDWLKLQTMLINEHRLTPFEASARKFLEQEREKFLFGGGTSTPQGYVPPRS.

The protein belongs to the Fe(2+)-trafficking protein family.

Functionally, could be a mediator in iron transactions between iron acquisition and iron-requiring processes, such as synthesis and/or repair of Fe-S clusters in biosynthetic enzymes. The chain is Probable Fe(2+)-trafficking protein from Methylococcus capsulatus (strain ATCC 33009 / NCIMB 11132 / Bath).